The following is a 344-amino-acid chain: Holliday junction branch migration complex subunit RuvB (344 aa).

Residues 4–184 (QDRIIDANAK…FGIVQRLEFY (181 aa)) form a large ATPase domain (RuvB-L) region. ATP contacts are provided by residues Arg-24, Gly-65, Lys-68, Thr-69, Thr-70, 131–133 (EDF), Arg-174, Tyr-184, and Arg-221. Thr-69 provides a ligand contact to Mg(2+). A small ATPAse domain (RuvB-S) region spans residues 185–255 (NIEDLTHIVE…IADLALNMLN (71 aa)). The interval 258 to 344 (EHGFDHMDRR…ALKQDSLPGI (87 aa)) is head domain (RuvB-H). Arg-294, Arg-313, and Arg-318 together coordinate DNA.

Belongs to the RuvB family. In terms of assembly, homohexamer. Forms an RuvA(8)-RuvB(12)-Holliday junction (HJ) complex. HJ DNA is sandwiched between 2 RuvA tetramers; dsDNA enters through RuvA and exits via RuvB. An RuvB hexamer assembles on each DNA strand where it exits the tetramer. Each RuvB hexamer is contacted by two RuvA subunits (via domain III) on 2 adjacent RuvB subunits; this complex drives branch migration. In the full resolvosome a probable DNA-RuvA(4)-RuvB(12)-RuvC(2) complex forms which resolves the HJ.

The protein resides in the cytoplasm. It carries out the reaction ATP + H2O = ADP + phosphate + H(+). Its function is as follows. The RuvA-RuvB-RuvC complex processes Holliday junction (HJ) DNA during genetic recombination and DNA repair, while the RuvA-RuvB complex plays an important role in the rescue of blocked DNA replication forks via replication fork reversal (RFR). RuvA specifically binds to HJ cruciform DNA, conferring on it an open structure. The RuvB hexamer acts as an ATP-dependent pump, pulling dsDNA into and through the RuvAB complex. RuvB forms 2 homohexamers on either side of HJ DNA bound by 1 or 2 RuvA tetramers; 4 subunits per hexamer contact DNA at a time. Coordinated motions by a converter formed by DNA-disengaged RuvB subunits stimulates ATP hydrolysis and nucleotide exchange. Immobilization of the converter enables RuvB to convert the ATP-contained energy into a lever motion, pulling 2 nucleotides of DNA out of the RuvA tetramer per ATP hydrolyzed, thus driving DNA branch migration. The RuvB motors rotate together with the DNA substrate, which together with the progressing nucleotide cycle form the mechanistic basis for DNA recombination by continuous HJ branch migration. Branch migration allows RuvC to scan DNA until it finds its consensus sequence, where it cleaves and resolves cruciform DNA. The protein is Holliday junction branch migration complex subunit RuvB of Saccharophagus degradans (strain 2-40 / ATCC 43961 / DSM 17024).